A 518-amino-acid chain; its full sequence is Putative malate dehydrogenase 1B (518 aa).

Belongs to the LDH/MDH superfamily. MDH type 2 family.

This Homo sapiens (Human) protein is Putative malate dehydrogenase 1B (MDH1B).